We begin with the raw amino-acid sequence, 299 residues long: GTPase Era (299 aa).

The Era-type G domain occupies 5–172 (KSGFVSIIGR…IDVLKTYLPE (168 aa)). The segment at 13-20 (GRPNVGKS) is G1. 13–20 (GRPNVGKS) is a GTP binding site. The tract at residues 39–43 (QTTRN) is G2. The G3 stretch occupies residues 60-63 (DTPG). GTP-binding positions include 60 to 64 (DTPGI) and 122 to 125 (NKID). A G4 region spans residues 122-125 (NKID). The G5 stretch occupies residues 151 to 153 (ISA). The KH type-2 domain maps to 203 to 280 (TSEEIPHAIG…YLELWVKVQR (78 aa)).

Belongs to the TRAFAC class TrmE-Era-EngA-EngB-Septin-like GTPase superfamily. Era GTPase family. As to quaternary structure, monomer.

Its subcellular location is the cytoplasm. It localises to the cell membrane. In terms of biological role, an essential GTPase that binds both GDP and GTP, with rapid nucleotide exchange. Plays a role in 16S rRNA processing and 30S ribosomal subunit biogenesis and possibly also in cell cycle regulation and energy metabolism. The chain is GTPase Era from Staphylococcus aureus (strain bovine RF122 / ET3-1).